The chain runs to 238 residues: Uridylate kinase (238 aa).

Residue 12 to 15 coordinates ATP; it reads KLSG. A UMP-binding site is contributed by glycine 54. ATP is bound by residues glycine 55 and arginine 59. UMP is bound by residues aspartate 74 and 135-142; that span reads TGNPFFTT. The ATP site is built by threonine 162, tyrosine 168, and aspartate 171.

It belongs to the UMP kinase family. As to quaternary structure, homohexamer.

It is found in the cytoplasm. The catalysed reaction is UMP + ATP = UDP + ADP. The protein operates within pyrimidine metabolism; CTP biosynthesis via de novo pathway; UDP from UMP (UMPK route): step 1/1. Its activity is regulated as follows. Inhibited by UTP. Catalyzes the reversible phosphorylation of UMP to UDP. In Bordetella avium (strain 197N), this protein is Uridylate kinase.